We begin with the raw amino-acid sequence, 588 residues long: Vesicular glutamate transporter 3 (588 aa).

Over 1–76 (MPFNAFDTFK…CSCCGIPKRY (76 aa)) the chain is Cytoplasmic. A helical transmembrane segment spans residues 77-97 (IIAVMSGLGFCISFGIRCNLG). The Vesicular segment spans residues 98–130 (VAIVEMVNNSTVYVDGKPEIQTAQFNWDPETVG). A glycan (N-linked (GlcNAc...) asparagine) is linked at N106. Residues 131–151 (LIHGSFFWGYIVTQIPGGFIS) form a helical membrane-spanning segment. Residues 152–153 (NK) are Cytoplasmic-facing. The helical transmembrane segment at 154 to 174 (FAANRVFGAAIFLTSTLNMFI) threads the bilayer. Over 175 to 182 (PSAARVHY) the chain is Vesicular. The chain crosses the membrane as a helical span at residues 183-203 (GCVMCVRILQGLVEGVTYPAC). Residues 204-221 (HGMWSKWAPPLERSRLAT) are Cytoplasmic-facing. Residues 222 to 242 (TSFCGSYAGAVVAMPLAGVLV) form a helical membrane-spanning segment. The Vesicular portion of the chain corresponds to 243 to 249 (QYIGWAS). The chain crosses the membrane as a helical span at residues 250–270 (VFYIYGMFGIIWYMFWLLQAY). Topologically, residues 271–314 (ECPAVHPTISNEERTYIETSIGEGANLASLSKFNTPWRRFFTSL) are cytoplasmic. A helical membrane pass occupies residues 315–335 (PVYAIIVANFCRSWTFYLLLI). Residues 336–353 (SQPAYFEEVFGFAISKVG) are Vesicular-facing. Residues 354–374 (LLSAVPHMVMTIVVPIGGQLA) form a helical membrane-spanning segment. Over 375–390 (DYLRSRKILTTTAVRK) the chain is Cytoplasmic. The helical transmembrane segment at 391 to 411 (IMNCGGFGMEATLLLVVGFSH) threads the bilayer. Topologically, residues 412 to 413 (TK) are vesicular. The chain crosses the membrane as a helical span at residues 414 to 434 (GVAISFLVLAVGFSGFAISGF). Residues 435-447 (NVNHLDIAPRYAS) are Cytoplasmic-facing. A helical membrane pass occupies residues 448 to 468 (ILMGISNGVGTLSGMVCPLIV). At 469–481 (GAMTKHKTREEWQ) the chain is on the vesicular side. Residues 482–502 (NVFLIAALVHYSGVIFYGVFA) traverse the membrane as a helical segment. Over 503–585 (SGEKQDWADP…LSYQNEEDFS (83 aa)) the chain is Cytoplasmic. Residues 539–588 (FVSPRKKMSYGATTQNCEVQKTDRRQQRESAFEGEEPLSYQNEEDFSETS) form a disordered region. Residues 558 to 569 (QKTDRRQQRESA) show a composition bias toward basic and acidic residues. A compositionally biased stretch (acidic residues) spans 570–588 (FEGEEPLSYQNEEDFSETS).

Belongs to the major facilitator superfamily. Sodium/anion cotransporter family. VGLUT subfamily. Expressed in brain, kidney and liver. Expressed within the amygdala, brainstem, cerberal cortex, dorsal root ganglia, dorsal spinal cord, hippocampus, hypothalamus, retina, striatum and ventral spinal cord. Expressed within neurons of the caudate-putamen, olfactory tubercle, nucleus accumbens, hippocampus, interpeduncular nucleus and dorsal and medial raphe nuclei. Expressed in inner hair cells of the ear. Expressed at synaptic terminals within the lateral superior olive (LSO), a nucleus of the mammalian sound localization system, and in the medial nucleus of the trapezoid body (MNTB), which provides inhibitory input to the LSO.

The protein resides in the cytoplasmic vesicle. It is found in the secretory vesicle. It localises to the synaptic vesicle membrane. The protein localises to the cell membrane. Its subcellular location is the synapse. The protein resides in the synaptosome. It catalyses the reaction L-glutamate(out) = L-glutamate(in). The enzyme catalyses chloride(in) = chloride(out). It carries out the reaction 3 Na(+)(out) + phosphate(out) = 3 Na(+)(in) + phosphate(in). With respect to regulation, the L-glutamate uniporter activity exhibits a biphasic dependence on chloride concentration. Chloride channel activity is allosterically activated by lumenal H(+) and Cl(-) leading to synaptic vesicles acidification. The glutamate transport activity is allosterically activated by lumenal H(+) and Cl(-), preventing non-vesicular L-glutamate release. Multifunctional transporter that transports L-glutamate as well as multiple ions such as chloride, sodium and phosphate. At the synaptic vesicle membrane, mainly functions as an uniporter that mediates the uptake of L-glutamate into synaptic vesicles at presynaptic nerve terminals of excitatory neural cells. The L-glutamate uniporter activity is electrogenic and is driven by the proton electrochemical gradient, mainly by the electrical gradient established by the vacuolar H(+)-ATPase across the synaptic vesicle membrane. In addition, functions as a chloride channel that allows a chloride permeation through the synaptic vesicle membrane that affects the proton electrochemical gradient and promotes synaptic vesicles acidification. At the plasma membrane, following exocytosis, functions as a symporter of Na(+) and phosphate from the extracellular space to the cytoplasm allowing synaptic phosphate homeostasis regulation. The symporter activity is electrogenic. Moreover, operates synergistically with SLC18A3/VACHT under a constant H(+) gradient, thereby allowing striatal vesicular acetylcholine uptake. The chain is Vesicular glutamate transporter 3 from Rattus norvegicus (Rat).